Consider the following 263-residue polypeptide: Small ribosomal subunit protein eS4 (263 aa).

The S4 RNA-binding domain maps to 42 to 104 (LPLIVFLRNR…TGEHFRLVYD (63 aa)).

Belongs to the eukaryotic ribosomal protein eS4 family.

The protein is Small ribosomal subunit protein eS4 (RPS4Y1) of Pongo pygmaeus (Bornean orangutan).